The chain runs to 88 residues: MIPRDPRSPAPDLSAINQPAGRAERRSGPATLSASIQSINCCREARVSSSPVNSLRNVVAIAAGIVVSRSSFGMASFSSGSQRSRRVT.

The interval 1–31 is disordered; sequence MIPRDPRSPAPDLSAINQPAGRAERRSGPAT.

This is an uncharacterized protein from Escherichia coli.